A 514-amino-acid chain; its full sequence is L-carnitine/gamma-butyrobetaine antiporter (514 aa).

At 1–11 (MSKDNKKAGIE) the chain is on the cytoplasmic side. The helical transmembrane segment at 12–30 (PKVFFPPLIIVGILCWLTV) threads the bilayer. The Periplasmic segment spans residues 31–42 (RDLDASNEVINA). Residues 43–68 (VFSYVTNVWGWAFEWYMVIMFGGWFW) form a helical membrane-spanning segment. Residues 69–91 (LVFGRYAKKRLGDEKPEFSTASW) lie on the Cytoplasmic side of the membrane. Residues 92-112 (IFMMFASCTSAAVLFWGSIEI) form a helical membrane-spanning segment. At 113 to 131 (YYYISSPPFGMEGYSAPAK) the chain is on the periplasmic side. A helical transmembrane segment spans residues 132–154 (EIGLAYSLFHWGPLPWATYSFLS). Residues 155–185 (VAFAYFFFVRKMEVIRPSSTLTPLVGEKHVN) lie on the Cytoplasmic side of the membrane. The helical transmembrane segment at 186 to 216 (GLFGTVVDNFYLVALILAMGTSLGLATPLVT) threads the bilayer. The Periplasmic segment spans residues 217–230 (ECIQYLFGIPHTLQ). A helical transmembrane segment spans residues 231-249 (LDAIIISCWILLNAICVAF). Residues 250–251 (GL) are Cytoplasmic-facing. A helical membrane pass occupies residues 252–277 (QKGVKIASDVRTYLSFLMLGWVFIVG). The Periplasmic segment spans residues 278 to 311 (GASFIVNYFTDSVGTLLMYMPRMLFYTDPIGKGG). A helical transmembrane segment spans residues 312-335 (FPQAWTVFYWAWWVIYAIQMSIFL). Residues 336 to 347 (ARISKGRTVREL) lie on the Cytoplasmic side of the membrane. A helical membrane pass occupies residues 348 to 369 (CLGMVSGLTAGTWLIWTILGGN). Topologically, residues 370 to 404 (TLQLIDQNILNIPQLIDQYGVPRAIIETWAALPLS) are periplasmic. A helical transmembrane segment spans residues 405-434 (TATMWGFFILCFIATVTLINACSYTLAMST). The Cytoplasmic portion of the chain corresponds to 435-445 (CRSMKEGAEPP). Residues 446–464 (LLVRIGWSVLVGIIGIILL) form a helical membrane-spanning segment. Topologically, residues 465 to 468 (ALGG) are periplasmic. A helical membrane pass occupies residues 469-492 (LKPIQTAIIAGGCPLFFVNIMVTL). Residues 493-514 (SFIKDAKVHWKDCSPYTQKMTH) are Cytoplasmic-facing.

It belongs to the BCCT transporter (TC 2.A.15) family. CaiT subfamily. As to quaternary structure, homotrimer.

The protein localises to the cell inner membrane. The enzyme catalyses 4-(trimethylamino)butanoate(in) + (R)-carnitine(out) = 4-(trimethylamino)butanoate(out) + (R)-carnitine(in). It participates in amine and polyamine metabolism; carnitine metabolism. Catalyzes the exchange of L-carnitine for gamma-butyrobetaine. The sequence is that of L-carnitine/gamma-butyrobetaine antiporter from Proteus mirabilis (strain HI4320).